Reading from the N-terminus, the 306-residue chain is Lipoyl synthase (306 aa).

Cys55, Cys60, Cys66, Cys81, Cys85, Cys88, and Ser294 together coordinate [4Fe-4S] cluster. A Radical SAM core domain is found at Trp67–Thr283.

Belongs to the radical SAM superfamily. Lipoyl synthase family. [4Fe-4S] cluster serves as cofactor.

The protein resides in the cytoplasm. It carries out the reaction [[Fe-S] cluster scaffold protein carrying a second [4Fe-4S](2+) cluster] + N(6)-octanoyl-L-lysyl-[protein] + 2 oxidized [2Fe-2S]-[ferredoxin] + 2 S-adenosyl-L-methionine + 4 H(+) = [[Fe-S] cluster scaffold protein] + N(6)-[(R)-dihydrolipoyl]-L-lysyl-[protein] + 4 Fe(3+) + 2 hydrogen sulfide + 2 5'-deoxyadenosine + 2 L-methionine + 2 reduced [2Fe-2S]-[ferredoxin]. The protein operates within protein modification; protein lipoylation via endogenous pathway; protein N(6)-(lipoyl)lysine from octanoyl-[acyl-carrier-protein]: step 2/2. Its function is as follows. Catalyzes the radical-mediated insertion of two sulfur atoms into the C-6 and C-8 positions of the octanoyl moiety bound to the lipoyl domains of lipoate-dependent enzymes, thereby converting the octanoylated domains into lipoylated derivatives. The chain is Lipoyl synthase from Chloroflexus aurantiacus (strain ATCC 29364 / DSM 637 / Y-400-fl).